Here is a 278-residue protein sequence, read N- to C-terminus: MTARIDAAFARCRAEGRAALVTYVMAGDPDPETSLKVLEALPKAGADIVEFGLPFTDPMADGPAIQAAGLRALKAGQDLRGTLALVRRFREGDDRTPVVLMGYYNPIHTYGVPRFLEDAQAAGIDGLIVVDLPPEEDEELCLPAREKGLAFIRLATPTTDAARLPAVLANTAGFVYYVSITGVTGTATPDFGRVSQAVGRIAAQTDLPVVVGFGVRTGAHAAEIARGADGVVVGSALVDALARSLEPGDRAGSGTVEAVAALVRELSEGVRSTVKTGA.

Residues glutamate 50 and aspartate 61 each act as proton acceptor in the active site.

Belongs to the TrpA family. Tetramer of two alpha and two beta chains.

The enzyme catalyses (1S,2R)-1-C-(indol-3-yl)glycerol 3-phosphate + L-serine = D-glyceraldehyde 3-phosphate + L-tryptophan + H2O. The protein operates within amino-acid biosynthesis; L-tryptophan biosynthesis; L-tryptophan from chorismate: step 5/5. The alpha subunit is responsible for the aldol cleavage of indoleglycerol phosphate to indole and glyceraldehyde 3-phosphate. This chain is Tryptophan synthase alpha chain, found in Methylorubrum populi (strain ATCC BAA-705 / NCIMB 13946 / BJ001) (Methylobacterium populi).